Reading from the N-terminus, the 59-residue chain is MKAFYGVLIIFILISMLDLSQQVFINVKCRGSPECLPKCKEAIGKSAGKCMNGKCKCYP.

An N-terminal signal peptide occupies residues M1–Q22. Disulfide bonds link C29-C50, C35-C55, and C39-C57. The interaction with Ca(2+)-activated K(+) channels stretch occupies residues G48–C55.

Expressed by the venom gland.

The protein resides in the secreted. Functionally, inhibits with low potency Kv1.1/KCNA1, Kv1.2/KCNA2, Kv1.3/KCNA3 and Kv11.1/KCNH2/ERG1 voltage-gated potassium channels. The protein is Potassium channel toxin alpha-KTx 4.5 of Tityus costatus (Brazilian scorpion).